The following is an 83-amino-acid chain: Cytochrome b559 subunit alpha (83 aa).

The helical transmembrane segment at 21-35 (VIHSITIPSLFIAGW) threads the bilayer. His-23 is a binding site for heme.

The protein belongs to the PsbE/PsbF family. In terms of assembly, heterodimer of an alpha subunit and a beta subunit. PSII is composed of 1 copy each of membrane proteins PsbA, PsbB, PsbC, PsbD, PsbE, PsbF, PsbH, PsbI, PsbJ, PsbK, PsbL, PsbM, PsbT, PsbX, PsbY, PsbZ, Psb30/Ycf12, at least 3 peripheral proteins of the oxygen-evolving complex and a large number of cofactors. It forms dimeric complexes. Requires heme b as cofactor.

It is found in the plastid. It localises to the chloroplast thylakoid membrane. Its function is as follows. This b-type cytochrome is tightly associated with the reaction center of photosystem II (PSII). PSII is a light-driven water:plastoquinone oxidoreductase that uses light energy to abstract electrons from H(2)O, generating O(2) and a proton gradient subsequently used for ATP formation. It consists of a core antenna complex that captures photons, and an electron transfer chain that converts photonic excitation into a charge separation. This is Cytochrome b559 subunit alpha from Citrus sinensis (Sweet orange).